Reading from the N-terminus, the 299-residue chain is Cuticle collagen 34 (299 aa).

The interval 105 to 282 is disordered; it reads PGPAGTPGKP…GSPGERGICP (178 aa). The span at 129 to 162 shows a compositional bias: pro residues; that stretch reads PGRPPQQPCEPITPPPCKPCPQGPPGPPGPPGPP. Over residues 164 to 181 the composition is skewed to low complexity; that stretch reads DSGEPGSPGLPGQDAAPG. Composition is skewed to pro residues over residues 182–195 and 215–233; these read EPGP…PGAP and PGEP…PGSP. A triple-helical region region spans residues 216-278; the sequence is GEPGPPGEAG…AGPPGSPGER (63 aa). Low complexity predominate over residues 251–263; that stretch reads NGPDGQPGADGNP. A compositionally biased stretch (pro residues) spans 265–274; the sequence is APGPAGPPGS.

Belongs to the cuticular collagen family. In terms of assembly, collagen polypeptide chains are complexed within the cuticle by disulfide bonds and other types of covalent cross-links.

In terms of biological role, nematode cuticles are composed largely of collagen-like proteins. The cuticle functions both as an exoskeleton and as a barrier to protect the worm from its environment. The polypeptide is Cuticle collagen 34 (col-34) (Caenorhabditis elegans).